We begin with the raw amino-acid sequence, 885 residues long: Dipeptidyl peptidase 9 (885 aa).

Active-site charge relay system residues include serine 752, aspartate 830, and histidine 862. Residue serine 752 participates in Val-boroPro binding.

This sequence belongs to the peptidase S9B family. DPPIV subfamily. Homodimer. Forms a ternary complex with NLRP1, composed of a DPP9 homodimer, one full-length NLRP1 protein, and one cleaved C-terminus of NLRP1 (NACHT, LRR and PYD domains-containing protein 1, C-terminus).

It localises to the nucleus. It carries out the reaction Release of an N-terminal dipeptide, Xaa-Yaa-|-Zaa-, from a polypeptide, preferentially when Yaa is Pro, provided Zaa is neither Pro nor hydroxyproline.. Functionally, dipeptidyl peptidase that cleaves off N-terminal dipeptides from proteins having a Pro or Ala residue at position 2. Acts as a key inhibitor of the NLRP1 inflammasome. The protein is Dipeptidyl peptidase 9 of Danio rerio (Zebrafish).